Here is a 160-residue protein sequence, read N- to C-terminus: 2-C-methyl-D-erythritol 2,4-cyclodiphosphate synthase (160 aa).

A divalent metal cation is bound by residues D11 and H13. Residues D11 to H13 and H37 to S38 contribute to the 4-CDP-2-C-methyl-D-erythritol 2-phosphate site. H45 contacts a divalent metal cation. Residues D59–G61, F64–D68, T135–E138, F142, and R145 each bind 4-CDP-2-C-methyl-D-erythritol 2-phosphate.

This sequence belongs to the IspF family. Homotrimer. Requires a divalent metal cation as cofactor.

It catalyses the reaction 4-CDP-2-C-methyl-D-erythritol 2-phosphate = 2-C-methyl-D-erythritol 2,4-cyclic diphosphate + CMP. It functions in the pathway isoprenoid biosynthesis; isopentenyl diphosphate biosynthesis via DXP pathway; isopentenyl diphosphate from 1-deoxy-D-xylulose 5-phosphate: step 4/6. Functionally, involved in the biosynthesis of isopentenyl diphosphate (IPP) and dimethylallyl diphosphate (DMAPP), two major building blocks of isoprenoid compounds. Catalyzes the conversion of 4-diphosphocytidyl-2-C-methyl-D-erythritol 2-phosphate (CDP-ME2P) to 2-C-methyl-D-erythritol 2,4-cyclodiphosphate (ME-CPP) with a corresponding release of cytidine 5-monophosphate (CMP). The polypeptide is 2-C-methyl-D-erythritol 2,4-cyclodiphosphate synthase (Alcanivorax borkumensis (strain ATCC 700651 / DSM 11573 / NCIMB 13689 / SK2)).